A 1506-amino-acid chain; its full sequence is DDB1- and CUL4-associated factor 1 (1506 aa).

The segment at 141–499 (QPLRTYSTGL…STLEILNLED (359 aa)) is protein kinase-like. Residues Ser202 and Ser254 each carry the phosphoserine modification. Positions 241–275 (RLDSSHKTSSRVNSATKPEEGGLKKNKSAKHGDRE) are disordered. The Chromo domain occupies 561–592 (SYTHEQIVEMMEFLIEYGPAQLYWEPAEVFLK). Lys700 is modified (N6-acetyllysine). Ser827 is subject to Phosphoserine. One can recognise a LisH domain in the interval 845–877 (PEKELLLLIRNHLISKGLGETATVLTREADLPM). The residue at position 887 (Thr887) is a Phosphothreonine. Phosphoserine occurs at positions 894 and 897. Disordered stretches follow at residues 916–946 (ATVG…GPSY) and 977–999 (KSDH…HLPS). A compositionally biased stretch (pro residues) spans 924–943 (SAPPAHPPPRPPQGSLPLPG). Phosphoserine occurs at positions 978 and 999. WD repeat units lie at residues 1090-1129 (EDES…EEAS), 1132-1173 (CHNS…DMKH), 1175-1212 (FTED…KLLT), 1214-1246 (FNPD…WDVR), and 1247-1289 (SAQA…LLHT). Residues 1090 to 1289 (EDESGFTCCA…DLRTFHLLHT (200 aa)) are WD repeat-like region. 2 short sequence motifs (DWD box) span residues 1241–1248 (VLWDVRSA) and 1277–1284 (EIWDLRTF). Residue Ser1327 is modified to Phosphoserine. The disordered stretch occupies residues 1392–1506 (RLAEDEDEEE…EDDIILSLNE (115 aa)). Acidic residues-rich tracts occupy residues 1395-1482 (EDED…EEVE) and 1489-1500 (DSSDNSDLEDDI). The segment at 1417–1506 (DDDTDDLDEL…EDDIILSLNE (90 aa)) is interaction with NF2.

This sequence belongs to the VPRBP/DCAF1 family. As to quaternary structure, component of the DCX (DDB1-CUL4-X-box) E3 ubiquitin-protein ligase complex, named CUL4A-RBX1-DDB1-DCAF1/VPRBP complex. Interacts with DDB1; the interaction is direct. Also forms a ternary complex with DDA1 and DDB1. Interacts with NF2 (via FERM domain). Component of the EDVP complex, a E3 ligase complex containing DYRK2, EDD/UBR5, DDB1 and DCAF1. Interacts with DYRK2; the interaction is direct. Interacts with RAG1; the interaction is direct. Interacts with LLGL1 and LLGL2. Interacts with histone H3. Interacts with ESR1 and LATS1; probably recruited by LATS1 to promote ESR1 ubiquitination and ubiquitin-mediated proteasomal degradation. Directly interacts with TET1, TET2 and TET3 (via C-terminus). Interacts with CEP78; promoting DCAF1 localization to centrosomes. Widely expressed. Expressed in oocytes and zygotes (at protein level).

It localises to the cytoplasm. Its subcellular location is the nucleus. The protein resides in the cytoskeleton. It is found in the microtubule organizing center. The protein localises to the centrosome. The catalysed reaction is L-seryl-[protein] + ATP = O-phospho-L-seryl-[protein] + ADP + H(+). The enzyme catalyses L-threonyl-[protein] + ATP = O-phospho-L-threonyl-[protein] + ADP + H(+). The protein operates within protein modification; protein ubiquitination. Its function is as follows. Acts both as a substrate recognition component of E3 ubiquitin-protein ligase complexes and as an atypical serine/threonine-protein kinase, playing key roles in various processes such as cell cycle, telomerase regulation and histone modification. Probable substrate-specific adapter of a DCX (DDB1-CUL4-X-box) E3 ubiquitin-protein ligase complex, named CUL4A-RBX1-DDB1-DCAF1/VPRBP complex, which mediates ubiquitination and proteasome-dependent degradation of proteins such as NF2. Involved in the turnover of methylated proteins: recognizes and binds methylated proteins via its chromo domain, leading to ubiquitination of target proteins by the RBX1-DDB1-DCAF1/VPRBP complex. The CUL4A-RBX1-DDB1-DCAF1/VPRBP complex is also involved in B-cell development: DCAF1 is recruited by RAG1 to ubiquitinate proteins, leading to limit error-prone repair during V(D)J recombination. Also part of the EDVP complex, an E3 ligase complex that mediates ubiquitination of proteins such as TERT, leading to TERT degradation and telomerase inhibition. The EDVP complex also mediates ubiquitination and degradation of CCP110. Also acts as an atypical serine/threonine-protein kinase that specifically mediates phosphorylation of 'Thr-120' of histone H2A (H2AT120ph) in a nucleosomal context, thereby repressing transcription. H2AT120ph is present in the regulatory region of many tumor suppresor genes, down-regulates their transcription and is present at high level in a number of tumors. Involved in JNK-mediated apoptosis during cell competition process via its interaction with LLGL1 and LLGL2. By acting on TET dioxygenses, essential for oocyte maintenance at the primordial follicle stage, hence essential for female fertility. In Mus musculus (Mouse), this protein is DDB1- and CUL4-associated factor 1.